The sequence spans 158 residues: NAD(P)H-quinone oxidoreductase subunit J, chloroplastic (158 aa).

It belongs to the complex I 30 kDa subunit family. As to quaternary structure, NDH is composed of at least 16 different subunits, 5 of which are encoded in the nucleus.

It is found in the plastid. Its subcellular location is the chloroplast thylakoid membrane. The catalysed reaction is a plastoquinone + NADH + (n+1) H(+)(in) = a plastoquinol + NAD(+) + n H(+)(out). The enzyme catalyses a plastoquinone + NADPH + (n+1) H(+)(in) = a plastoquinol + NADP(+) + n H(+)(out). Its function is as follows. NDH shuttles electrons from NAD(P)H:plastoquinone, via FMN and iron-sulfur (Fe-S) centers, to quinones in the photosynthetic chain and possibly in a chloroplast respiratory chain. The immediate electron acceptor for the enzyme in this species is believed to be plastoquinone. Couples the redox reaction to proton translocation, and thus conserves the redox energy in a proton gradient. The sequence is that of NAD(P)H-quinone oxidoreductase subunit J, chloroplastic from Nymphaea alba (White water-lily).